Consider the following 1041-residue polypeptide: Isoleucine--tRNA ligase (1041 aa).

A 'HIGH' region motif is present at residues 53–63; it reads PFANGLPHYGH. The 'KMSKS' region signature appears at 619-623; that stretch reads KMSKS. Lys-622 is an ATP binding site.

It belongs to the class-I aminoacyl-tRNA synthetase family. IleS type 2 subfamily. As to quaternary structure, monomer. It depends on Zn(2+) as a cofactor.

It is found in the cytoplasm. The enzyme catalyses tRNA(Ile) + L-isoleucine + ATP = L-isoleucyl-tRNA(Ile) + AMP + diphosphate. Its function is as follows. Catalyzes the attachment of isoleucine to tRNA(Ile). As IleRS can inadvertently accommodate and process structurally similar amino acids such as valine, to avoid such errors it has two additional distinct tRNA(Ile)-dependent editing activities. One activity is designated as 'pretransfer' editing and involves the hydrolysis of activated Val-AMP. The other activity is designated 'posttransfer' editing and involves deacylation of mischarged Val-tRNA(Ile). The chain is Isoleucine--tRNA ligase from Mycobacterium bovis (strain ATCC BAA-935 / AF2122/97).